We begin with the raw amino-acid sequence, 163 residues long: Phosphopantetheine adenylyltransferase (163 aa).

Thr-9 serves as a coordination point for substrate. Residues 9 to 10 (TF) and His-17 each bind ATP. Residues Lys-41, Leu-73, and Arg-87 each contribute to the substrate site. ATP is bound by residues 88–90 (GLR), Glu-98, and 123–129 (YQFISGT).

This sequence belongs to the bacterial CoaD family. As to quaternary structure, homohexamer. The cofactor is Mg(2+).

The protein localises to the cytoplasm. It carries out the reaction (R)-4'-phosphopantetheine + ATP + H(+) = 3'-dephospho-CoA + diphosphate. The protein operates within cofactor biosynthesis; coenzyme A biosynthesis; CoA from (R)-pantothenate: step 4/5. Its function is as follows. Reversibly transfers an adenylyl group from ATP to 4'-phosphopantetheine, yielding dephospho-CoA (dPCoA) and pyrophosphate. This chain is Phosphopantetheine adenylyltransferase, found in Herminiimonas arsenicoxydans.